Consider the following 280-residue polypeptide: Probable endonuclease 4 (280 aa).

Residues H69, H109, E145, D179, H182, H216, D229, H231, and E261 each contribute to the Zn(2+) site.

This sequence belongs to the AP endonuclease 2 family. Zn(2+) serves as cofactor.

It carries out the reaction Endonucleolytic cleavage to 5'-phosphooligonucleotide end-products.. Its function is as follows. Endonuclease IV plays a role in DNA repair. It cleaves phosphodiester bonds at apurinic or apyrimidinic (AP) sites, generating a 3'-hydroxyl group and a 5'-terminal sugar phosphate. The polypeptide is Probable endonuclease 4 (Actinobacillus pleuropneumoniae serotype 7 (strain AP76)).